The chain runs to 582 residues: L-fucose isomerase (582 aa).

Active-site proton acceptor residues include glutamate 333 and aspartate 357. Residues glutamate 333, aspartate 357, and histidine 520 each contribute to the Mn(2+) site.

The protein belongs to the L-fucose isomerase family. Mn(2+) is required as a cofactor.

It localises to the cytoplasm. The enzyme catalyses L-fucose = L-fuculose. Its pathway is carbohydrate degradation; L-fucose degradation; L-lactaldehyde and glycerone phosphate from L-fucose: step 1/3. Converts the aldose L-fucose into the corresponding ketose L-fuculose. The polypeptide is L-fucose isomerase (Vibrio vulnificus (strain YJ016)).